A 561-amino-acid polypeptide reads, in one-letter code: Putative ABC transporter ATP-binding protein SAV_5847 (561 aa).

An ABC transporter 1 domain is found at 2-243; that stretch reads IRFEDVSVTY…SPVYPPVVDL (242 aa). Residue 36–43 coordinates ATP; that stretch reads GPSGVGKS. Residues 268–299 form a disordered region; the sequence is ERLAATETPTPTATATATAAPAPSPSRPRRPR. The segment covering 272–288 has biased composition (low complexity); sequence ATETPTPTATATATAAP. In terms of domain architecture, ABC transporter 2 spans 315 to 543; the sequence is AAVEALAVRR…SPSFAPQVTK (229 aa). An ATP-binding site is contributed by 347-354; it reads GRNGAGKS.

This sequence belongs to the ABC transporter superfamily.

It localises to the cell membrane. Functionally, probably part of an ABC transporter complex. Responsible for energy coupling to the transport system. The protein is Putative ABC transporter ATP-binding protein SAV_5847 of Streptomyces avermitilis (strain ATCC 31267 / DSM 46492 / JCM 5070 / NBRC 14893 / NCIMB 12804 / NRRL 8165 / MA-4680).